Reading from the N-terminus, the 419-residue chain is MTTQLEQAWELAKQRFAAVGIDVEEALRQLDRLPVSMHCWQGDDVAGFENPEGSLTGGIQSTGNYPGKARNATELRADLEQALRLIPGPKRLNLHAIYLESDTPVARDQIKPEHFKNWVEWAKANRLGLDFNPTCFSHPLSADGFTLSHPDAKIRQFWIDHCKASRRVSAYFGEQLGTPSVMNIWIPDGMKDITVDRLAPRQRLLEALDEVISEKFDPAHHIDAVESKLFGIGAESYTVGSNEFYMGYATSRQTALCLDAGHFHPTEVISDKISAAMLYVPRLLLHVSRPVRWDSDHVVLLDDETQAIASEIVRHNLFDRVHIGLDFFDASINRVAAWVIGTRNMKKALLRALLEPTDQLRQLEASGDYTARLALLEEQKSLPWQAVWEMYCQRHDTPAGSQWLDSVRVYEKEILSKRS.

Mn(2+) contacts are provided by His-262, Asp-294, and Asp-296.

It belongs to the rhamnose isomerase family. In terms of assembly, homotetramer. It depends on Mn(2+) as a cofactor.

The protein localises to the cytoplasm. It catalyses the reaction L-rhamnopyranose = L-rhamnulose. It participates in carbohydrate degradation; L-rhamnose degradation; glycerone phosphate from L-rhamnose: step 1/3. Functionally, catalyzes the interconversion of L-rhamnose and L-rhamnulose. This Salmonella typhimurium (strain LT2 / SGSC1412 / ATCC 700720) protein is L-rhamnose isomerase.